A 379-amino-acid polypeptide reads, in one-letter code: Spermidine/putrescine import ATP-binding protein PotA (379 aa).

Positions 10–240 constitute an ABC transporter domain; the sequence is VTIDQVSKAY…PATDFVAKFI (231 aa). Position 42–49 (42–49) interacts with ATP; it reads GPSGCGKT.

It belongs to the ABC transporter superfamily. Spermidine/putrescine importer (TC 3.A.1.11.1) family. The complex is composed of two ATP-binding proteins (PotA), two transmembrane proteins (PotB and PotC) and a solute-binding protein (PotD).

It localises to the cell inner membrane. The enzyme catalyses ATP + H2O + polyamine-[polyamine-binding protein]Side 1 = ADP + phosphate + polyamineSide 2 + [polyamine-binding protein]Side 1.. Functionally, part of the ABC transporter complex PotABCD involved in spermidine/putrescine import. Responsible for energy coupling to the transport system. The polypeptide is Spermidine/putrescine import ATP-binding protein PotA (Treponema pallidum (strain Nichols)).